An 81-amino-acid chain; its full sequence is Defensin-like protein 153 (81 aa).

Residues 1-26 (MKNVSQVSVAVLLIFSILVLGIGVQG) form the signal peptide. 4 disulfide bridges follow: cysteine 30-cysteine 81, cysteine 41-cysteine 60, cysteine 46-cysteine 75, and cysteine 50-cysteine 77.

This sequence belongs to the DEFL family.

It localises to the secreted. This is Defensin-like protein 153 (LCR31) from Arabidopsis thaliana (Mouse-ear cress).